Here is a 440-residue protein sequence, read N- to C-terminus: Chromosomal replication initiator protein DnaA (440 aa).

The domain I, interacts with DnaA modulators stretch occupies residues 1 to 74; that stretch reads MNPSQILENL…VQSGNKAIIN (74 aa). The interval 74–99 is domain II; that stretch reads NIQAQSAKQSNKSTKIDIAHIKAQST. Positions 100–316 are domain III, AAA+ region; that stretch reads ILNPSFTFDS…GIIISLNAYA (217 aa). The ATP site is built by glycine 146, glycine 148, lysine 149, and threonine 150. The segment at 317–440 is domain IV, binds dsDNA; that stretch reads TILGQEITLE…KNKILVKSQS (124 aa).

This sequence belongs to the DnaA family. In terms of assembly, oligomerizes as a right-handed, spiral filament on DNA at oriC.

Its subcellular location is the cytoplasm. Functionally, plays an essential role in the initiation and regulation of chromosomal replication. ATP-DnaA binds to the origin of replication (oriC) to initiate formation of the DNA replication initiation complex once per cell cycle. Binds the DnaA box (a 9 base pair repeat at the origin) and separates the double-stranded (ds)DNA. Forms a right-handed helical filament on oriC DNA; dsDNA binds to the exterior of the filament while single-stranded (ss)DNA is stabiized in the filament's interior. The ATP-DnaA-oriC complex binds and stabilizes one strand of the AT-rich DNA unwinding element (DUE), permitting loading of DNA polymerase. After initiation quickly degrades to an ADP-DnaA complex that is not apt for DNA replication. Binds acidic phospholipids. The sequence is that of Chromosomal replication initiator protein DnaA from Campylobacter jejuni subsp. jejuni serotype O:23/36 (strain 81-176).